The chain runs to 120 residues: ATP-dependent Clp protease adapter protein ClpS (120 aa).

The disordered stretch occupies residues 9-32 (LTFNQDHPAEHEDDSSGIAVQESK).

This sequence belongs to the ClpS family. Binds to the N-terminal domain of the chaperone ClpA.

Involved in the modulation of the specificity of the ClpAP-mediated ATP-dependent protein degradation. This chain is ATP-dependent Clp protease adapter protein ClpS, found in Ectopseudomonas mendocina (strain ymp) (Pseudomonas mendocina).